Consider the following 322-residue polypeptide: Fructose-1,6-bisphosphatase class 1 (322 aa).

Mg(2+) contacts are provided by Glu-84, Asp-103, Leu-105, and Asp-106. Substrate is bound by residues 106–109 (DGSS), Asn-198, and Lys-264. Mg(2+) is bound at residue Glu-270.

It belongs to the FBPase class 1 family. Homotetramer. The cofactor is Mg(2+).

Its subcellular location is the cytoplasm. It catalyses the reaction beta-D-fructose 1,6-bisphosphate + H2O = beta-D-fructose 6-phosphate + phosphate. Its pathway is carbohydrate biosynthesis; gluconeogenesis. This is Fructose-1,6-bisphosphatase class 1 from Colwellia psychrerythraea (strain 34H / ATCC BAA-681) (Vibrio psychroerythus).